The chain runs to 222 residues: Probable nicotinate-nucleotide adenylyltransferase (222 aa).

Belongs to the NadD family.

The enzyme catalyses nicotinate beta-D-ribonucleotide + ATP + H(+) = deamido-NAD(+) + diphosphate. It participates in cofactor biosynthesis; NAD(+) biosynthesis; deamido-NAD(+) from nicotinate D-ribonucleotide: step 1/1. Its function is as follows. Catalyzes the reversible adenylation of nicotinate mononucleotide (NaMN) to nicotinic acid adenine dinucleotide (NaAD). In Stenotrophomonas maltophilia (strain K279a), this protein is Probable nicotinate-nucleotide adenylyltransferase.